The chain runs to 384 residues: Chaperone protein DnaJ (384 aa).

The 66-residue stretch at 6–71 (DYYEVLGISK…TKRKTYDQFG (66 aa)) folds into the J domain. Residues 141–223 (GKKMSIKVNR…CHGTGNTRKV (83 aa)) form a CR-type zinc finger. Cysteine 154, cysteine 157, cysteine 171, cysteine 174, cysteine 197, cysteine 200, cysteine 211, and cysteine 214 together coordinate Zn(2+). CXXCXGXG motif repeat units lie at residues 154 to 161 (CEECNGTG), 171 to 178 (CSTCNGTG), 197 to 204 (CSACNGTG), and 211 to 218 (CSKCHGTG).

Belongs to the DnaJ family. In terms of assembly, homodimer. Zn(2+) is required as a cofactor.

The protein localises to the cytoplasm. In terms of biological role, participates actively in the response to hyperosmotic and heat shock by preventing the aggregation of stress-denatured proteins and by disaggregating proteins, also in an autonomous, DnaK-independent fashion. Unfolded proteins bind initially to DnaJ; upon interaction with the DnaJ-bound protein, DnaK hydrolyzes its bound ATP, resulting in the formation of a stable complex. GrpE releases ADP from DnaK; ATP binding to DnaK triggers the release of the substrate protein, thus completing the reaction cycle. Several rounds of ATP-dependent interactions between DnaJ, DnaK and GrpE are required for fully efficient folding. Also involved, together with DnaK and GrpE, in the DNA replication of plasmids through activation of initiation proteins. The polypeptide is Chaperone protein DnaJ (Clostridioides difficile (strain 630) (Peptoclostridium difficile)).